An 848-amino-acid polypeptide reads, in one-letter code: MSAAAVLAVVAAAVAALAAAASGYELTKNGTVITYDRRSLIIDGHREIFFSGSIHYPRSPPDTWPDLISKAKEGGLNVIESYVFWNGHEPEQGVYNFEGRYDLIKFFKLIQEKEMYAIVRIGPFVQAEWNHGGLPYWLREIPDIIFRTNNEPFKKYMKQFVTLIVNKLKEAKLFASQGGPIILAQIENEYQHLEVAFKEAGTKYINWAAKMAIATNTGVPWIMCKQTKAPGEVIPTCNGRHCGDTWPGPADKKKPLLWTENWTAQYRVFGDPPSQRSAEDIAFSVARFFSVGGTMANYYMYHGGTNFGRNGAAFVMPRYYDEAPLDEFGLYKEPKWGHLRDLHHALRHCKKALLWGNPSVQPLGKLYEARVFEMKEKNVCVAFLSNHNTKEDGTVTFRGQKYFVARRSISILADCKTVVFSTQHVNSQHNQRTFHFADQTVQDNVWEMYSEEKIPRYSKTSIRTQRPLEQYNQTKDKTDYLWYTTSFRLETDDLPYRKEVKPVLEVSSHGHAIVAFVNDAFVGCGHGTKINKAFTMEKAMDLKVGVNHVAILSSTLGLMDSGSYLEHRMAGVYTVTIRGLNTGTLDLTTNGWGHVVGLDGERRRVHSEQGMGAVAWKPGKDNQPLTWYRRRFDPPSGTDPVVIDLTPMGKGFLFVNGEGLGRYWVSYHHALGKPSQYLYHVPRSLLRPKGNTLMFFEEEGGKPDAIMILTVKRDNICTFMTEKNPAHVRWSWESKDSQPKAVAGAGAGAGGLKPTAVLSCPTKKTIQSVVFASYGNPLGICGNYTVGSCHAPRTKEVVEKACIGRKTCSLVVSSEVYGGDVHCPGTTGTLAVQAKCSKRPPRSAATAQ.

A signal peptide spans 1-23; it reads MSAAAVLAVVAAAVAALAAAASG. N-linked (GlcNAc...) asparagine glycosylation occurs at Asn29. Glu189 functions as the Proton donor in the catalytic mechanism. The Nucleophile role is filled by Glu260. Asn261, Asn472, and Asn783 each carry an N-linked (GlcNAc...) asparagine glycan. Residues 750–837 enclose the SUEL-type lectin domain; the sequence is GGLKPTAVLS…GTLAVQAKCS (88 aa).

Belongs to the glycosyl hydrolase 35 family.

It is found in the secreted. The protein resides in the extracellular space. It localises to the apoplast. The enzyme catalyses Hydrolysis of terminal non-reducing beta-D-galactose residues in beta-D-galactosides.. This Oryza sativa subsp. japonica (Rice) protein is Beta-galactosidase 11.